A 265-amino-acid chain; its full sequence is Undecaprenyl-diphosphatase (265 aa).

The next 7 membrane-spanning stretches (helical) occupy residues 38 to 58 (RSDF…CLAL), 75 to 95 (RDYV…GLIV), 108 to 128 (PVAW…HFAG), 135 to 155 (VVTW…GVFP), 181 to 201 (FVFM…LLEM), 215 to 235 (VAVA…WLLG), and 244 to 264 (VFAV…PAAA).

This sequence belongs to the UppP family.

It is found in the cell inner membrane. The enzyme catalyses di-trans,octa-cis-undecaprenyl diphosphate + H2O = di-trans,octa-cis-undecaprenyl phosphate + phosphate + H(+). Catalyzes the dephosphorylation of undecaprenyl diphosphate (UPP). Confers resistance to bacitracin. In Xanthomonas axonopodis pv. citri (strain 306), this protein is Undecaprenyl-diphosphatase.